The chain runs to 218 residues: Capsid protein (218 aa).

Methionine 1 is subject to N-acetylmethionine; by host. A compositionally biased stretch (low complexity) spans 1 to 10 (MDKSESTSAG). Residues 1–30 (MDKSESTSAGRNRRRRPRRGSRSASSSSDA) form a disordered region. Residues 11–21 (RNRRRRPRRGS) show a composition bias toward basic residues.

The protein belongs to the cucumovirus capsid protein family.

The protein localises to the virion. Its function is as follows. Capsid protein. Probably binds RNA and plays a role in packaging. In Cucumis sativus (Cucumber), this protein is Capsid protein.